The following is a 243-amino-acid chain: MSPAAPVPPDSALESPFEEMALVRGGWLWRQSSILRRWKRNWFALWLDGTLGYYHDETAQDEEDRVLIHFNVRDIKIGPECHDVQPPEGRSRDGLLTVNLREGGRLHLCAETKDDALAWKTALLEANSTPAPAGATVPPRSRRVCSKVRCVTRSWSPCKVERRIWVRVYSPYQDYYEVVPPNAHEATYVRSYYGPPYAGPGVTHVIVREDPCYSAGAPLAMGMLAGAATGAALGSLMWSPCWF.

The PH domain occupies 21 to 128; sequence ALVRGGWLWR…WKTALLEANS (108 aa).

In terms of assembly, homodimer. Interacts (via PH domain) with MYO1C. Interacts (via PH domain) with MYO7A. Binds transducins. As to expression, highly expressed in retina and brain. Levels are very low or not detectable in all other tissues tested.

It localises to the membrane. It is found in the cytoplasm. The chain is Pleckstrin homology domain-containing family B member 1 (PLEKHB1) from Homo sapiens (Human).